Reading from the N-terminus, the 336-residue chain is Transcription initiation factor IIB (336 aa).

The TFIIB-type zinc-finger motif lies at 41-72 (QKLRCPICGNTVFIEDAERGQIVCASCGYVLM). The Zn(2+) site is built by cysteine 45, cysteine 48, cysteine 64, and cysteine 67. 2 tandem repeats follow at residues 152-235 (HELN…AREL) and 246-327 (QYVP…ELAK).

This sequence belongs to the TFIIB family.

Stabilizes TBP binding to an archaeal box-A promoter. Also responsible for recruiting RNA polymerase II to the pre-initiation complex (DNA-TBP-TFIIB). This chain is Transcription initiation factor IIB, found in Caldivirga maquilingensis (strain ATCC 700844 / DSM 13496 / JCM 10307 / IC-167).